The chain runs to 390 residues: Altered inheritance of mitochondria protein 6 (390 aa).

The first 26 residues, 1–26 (MLGLKGCLTILIGYVIAVCALFSSRG), serve as a signal peptide directing secretion.

Belongs to the AIM6 family.

This is Altered inheritance of mitochondria protein 6 (AIM6) from Saccharomyces cerevisiae (strain YJM789) (Baker's yeast).